The primary structure comprises 180 residues: Acireductone dioxygenase (180 aa).

Residues His-97, His-99, Glu-103, and His-141 each contribute to the Fe(2+) site. The Ni(2+) site is built by His-97, His-99, Glu-103, and His-141.

Belongs to the acireductone dioxygenase (ARD) family. Monomer. Fe(2+) serves as cofactor. Requires Ni(2+) as cofactor.

The catalysed reaction is 1,2-dihydroxy-5-(methylsulfanyl)pent-1-en-3-one + O2 = 3-(methylsulfanyl)propanoate + CO + formate + 2 H(+). It catalyses the reaction 1,2-dihydroxy-5-(methylsulfanyl)pent-1-en-3-one + O2 = 4-methylsulfanyl-2-oxobutanoate + formate + 2 H(+). It functions in the pathway amino-acid biosynthesis; L-methionine biosynthesis via salvage pathway; L-methionine from S-methyl-5-thio-alpha-D-ribose 1-phosphate: step 5/6. Its function is as follows. Catalyzes 2 different reactions between oxygen and the acireductone 1,2-dihydroxy-3-keto-5-methylthiopentene (DHK-MTPene) depending upon the metal bound in the active site. Fe-containing acireductone dioxygenase (Fe-ARD) produces formate and 2-keto-4-methylthiobutyrate (KMTB), the alpha-ketoacid precursor of methionine in the methionine recycle pathway. Ni-containing acireductone dioxygenase (Ni-ARD) produces methylthiopropionate, carbon monoxide and formate, and does not lie on the methionine recycle pathway. The chain is Acireductone dioxygenase from Acidiphilium cryptum (strain JF-5).